The sequence spans 263 residues: Purine nucleoside phosphorylase SACOL1200 (263 aa).

3 residues coordinate Zn(2+): histidine 79, cysteine 124, and histidine 141.

Belongs to the purine nucleoside phosphorylase YfiH/LACC1 family. Homodimer. The cofactor is Cu(2+). Zn(2+) is required as a cofactor.

It carries out the reaction adenosine + phosphate = alpha-D-ribose 1-phosphate + adenine. The catalysed reaction is S-methyl-5'-thioadenosine + phosphate = 5-(methylsulfanyl)-alpha-D-ribose 1-phosphate + adenine. It catalyses the reaction inosine + phosphate = alpha-D-ribose 1-phosphate + hypoxanthine. The enzyme catalyses adenosine + H2O + H(+) = inosine + NH4(+). In terms of biological role, purine nucleoside enzyme that catalyzes the phosphorolysis of adenosine and inosine nucleosides, yielding D-ribose 1-phosphate and the respective free bases, adenine and hypoxanthine. Also catalyzes the phosphorolysis of S-methyl-5'-thioadenosine into adenine and S-methyl-5-thio-alpha-D-ribose 1-phosphate. Also has adenosine deaminase activity. This is Purine nucleoside phosphorylase SACOL1200 from Staphylococcus aureus (strain COL).